Consider the following 377-residue polypeptide: Protein RecA (377 aa).

66 to 73 (GPESSGKT) serves as a coordination point for ATP. Residues 329–377 (VGVRPEEPTAEPGADAAVTSAAAATDDTAKTVSAPAAKTTKSKAAAAKS) form a disordered region. Positions 342–377 (ADAAVTSAAAATDDTAKTVSAPAAKTTKSKAAAAKS) are enriched in low complexity.

Belongs to the RecA family.

Its subcellular location is the cytoplasm. Functionally, can catalyze the hydrolysis of ATP in the presence of single-stranded DNA, the ATP-dependent uptake of single-stranded DNA by duplex DNA, and the ATP-dependent hybridization of homologous single-stranded DNAs. It interacts with LexA causing its activation and leading to its autocatalytic cleavage. The polypeptide is Protein RecA (Streptomyces avermitilis (strain ATCC 31267 / DSM 46492 / JCM 5070 / NBRC 14893 / NCIMB 12804 / NRRL 8165 / MA-4680)).